The sequence spans 209 residues: V-type ATP synthase subunit D (209 aa).

The protein belongs to the V-ATPase D subunit family.

Its function is as follows. Produces ATP from ADP in the presence of a proton gradient across the membrane. This chain is V-type ATP synthase subunit D (atpD), found in Chlamydia pneumoniae (Chlamydophila pneumoniae).